Consider the following 33-residue polypeptide: Photosystem II reaction center protein Psb30 (33 aa).

A helical membrane pass occupies residues 5 to 25 (VIAQLTVLALIVISGPLVIAL).

Belongs to the Psb30/Ycf12 family. As to quaternary structure, PSII is composed of 1 copy each of membrane proteins PsbA, PsbB, PsbC, PsbD, PsbE, PsbF, PsbH, PsbI, PsbJ, PsbK, PsbL, PsbM, PsbT, PsbX, PsbY, PsbZ, Psb30/Ycf12, peripheral proteins of the oxygen-evolving complex and a large number of cofactors. It forms dimeric complexes.

Its subcellular location is the plastid. The protein localises to the chloroplast thylakoid membrane. Its function is as follows. A core subunit of photosystem II (PSII), probably helps stabilize the reaction center. The sequence is that of Photosystem II reaction center protein Psb30 from Huperzia lucidula (Shining clubmoss).